A 175-amino-acid chain; its full sequence is UPF0178 protein GOX1710 (175 aa).

It belongs to the UPF0178 family.

This is UPF0178 protein GOX1710 from Gluconobacter oxydans (strain 621H) (Gluconobacter suboxydans).